Here is an 883-residue protein sequence, read N- to C-terminus: MPGGGSQEYGVLCIQEYRKNSKVESSTRNNFMGLKDHLGHDLGHLYVESTDPQLSPAVPWSTVENPSMDTVNVGKDEKEASEENASSGDSEENTNSDHESEQLGSISVEPGLITKTHRQLCRSPCLEPHILKRNEILQDFKPEESQTTSKEAKKPPDVVREYQTKLEFALKLGYSEEQVQLVLNKLGTDALINDILGELVKLGNKSEADQTVSTINTITRETSSLESQRSESPMQEIVTDDGENLRPIVIDGSNVAMSHGNKEVFSCRGIKLAVDWFLERGHKDITVFVPAWRKEQSRPDALITDQEILRKLEKEKILVFTPSRRVQGRRVVCYDDRFIVKLAFESDGIIVSNDNYRDLANEKPEWKKFIDERLLMYSFVNDKFMPPDDPLGRHGPSLDNFLRKKPIVPEHKKQPCPYGKKCTYGHKCKYYHPERGSQPQRSVADELRAMSRNTAAKTANEGGLVKSNSVPCSTKADSTSDVKRGAPKRQSDPSIRTQVYQDLEEKLPTKNKLETRSVPSLVSIPATSTAKPQSTTSLSNGLPSGVHFPPQDQRPQGQYPSMMMATKNHGTPMPYEQYPKCDSPVDIGYYSMLNAYSNLSLSGPRSPERRFSLDTDYRISSVASDCSSEGSMSCGSSDSYVGYNDRSYVSSPDPQLEENLKCQHMHPHSRLNPQPFLQNFHDPLTRGQSYSHEEPKFHHKPPLPHLALHLPHSAVGARSSCPGDYPSPPSSAHSKAPHLGRSLVATRIDSISDSRLYDSSPSRQRKPYSRQEGLGSWERPGYGIDAYGYRQTYSLPDNSTQPCYEQFTFQSLPEQQEPAWRIPYCGMPQDPPRYQDNREKIYINLCNIFPPDLVRIVMKRNPHMTDAQQLAAAILVEKSQLGY.

Disordered regions lie at residues 53 to 109 (QLSP…ISVE) and 139 to 158 (DFKP…PPDV). Phosphoserine is present on Ser-230. The 156-residue stretch at 245 to 400 (LRPIVIDGSN…LGRHGPSLDN (156 aa)) folds into the RNase NYN domain. A C3H1-type zinc finger spans residues 410-435 (EHKKQPCPYGKKCTYGHKCKYYHPER). Disordered regions lie at residues 456–551 (AKTA…FPPQ), 680–738 (FHDP…KAPH), and 754–775 (SRLY…EGLG). Over residues 466 to 477 (KSNSVPCSTKAD) the composition is skewed to polar residues. Positions 503-515 (LEEKLPTKNKLET) are enriched in basic and acidic residues. Residues 517-542 (SVPSLVSIPATSTAKPQSTTSLSNGL) show a composition bias toward polar residues. Over residues 705–714 (HLALHLPHSA) the composition is skewed to low complexity.

It belongs to the ZC3H12 family. The cofactor is Mg(2+).

In terms of biological role, may function as RNase and regulate the levels of target RNA species. This is Probable ribonuclease ZC3H12C (ZC3H12C) from Homo sapiens (Human).